The chain runs to 298 residues: ATP synthase gamma chain (298 aa).

The protein belongs to the ATPase gamma chain family. F-type ATPases have 2 components, CF(1) - the catalytic core - and CF(0) - the membrane proton channel. CF(1) has five subunits: alpha(3), beta(3), gamma(1), delta(1), epsilon(1). CF(0) has three main subunits: a, b and c.

It localises to the cell membrane. Its function is as follows. Produces ATP from ADP in the presence of a proton gradient across the membrane. The gamma chain is believed to be important in regulating ATPase activity and the flow of protons through the CF(0) complex. The chain is ATP synthase gamma chain from Parafrankia sp. (strain EAN1pec).